A 428-amino-acid polypeptide reads, in one-letter code: Histidine--tRNA ligase (428 aa).

Belongs to the class-II aminoacyl-tRNA synthetase family. Homodimer.

It localises to the cytoplasm. It catalyses the reaction tRNA(His) + L-histidine + ATP = L-histidyl-tRNA(His) + AMP + diphosphate + H(+). The protein is Histidine--tRNA ligase of Buchnera aphidicola subsp. Schizaphis graminum (strain Sg).